Reading from the N-terminus, the 437-residue chain is Nicotinate phosphoribosyltransferase (437 aa).

Phosphohistidine; by autocatalysis is present on His231.

This sequence belongs to the NAPRTase family. Transiently phosphorylated on a His residue during the reaction cycle. Phosphorylation strongly increases the affinity for substrates and increases the rate of nicotinate D-ribonucleotide production. Dephosphorylation regenerates the low-affinity form of the enzyme, leading to product release.

It catalyses the reaction nicotinate + 5-phospho-alpha-D-ribose 1-diphosphate + ATP + H2O = nicotinate beta-D-ribonucleotide + ADP + phosphate + diphosphate. Its pathway is cofactor biosynthesis; NAD(+) biosynthesis; nicotinate D-ribonucleotide from nicotinate: step 1/1. Catalyzes the synthesis of beta-nicotinate D-ribonucleotide from nicotinate and 5-phospho-D-ribose 1-phosphate at the expense of ATP. This Vibrio vulnificus (strain CMCP6) protein is Nicotinate phosphoribosyltransferase.